A 337-amino-acid polypeptide reads, in one-letter code: RAD51-associated protein 1 (337 aa).

2 disordered regions span residues 1 to 69 and 88 to 337; these read MVRP…PPKK and LSVK…SQVR. Phosphoserine occurs at positions 19 and 23. Polar residues predominate over residues 28-38; the sequence is ISSSTPVNKSK. Positions 32–50 are interaction with DNA; it reads TPVNKSKTVPKVLKQDKPK. The span at 44 to 69 shows a compositional bias: basic and acidic residues; the sequence is LKQDKPKPNLKNLQKEEVLPTEPPKK. Ser103 and Ser107 each carry phosphoserine. A compositionally biased stretch (basic and acidic residues) spans 105–118; it reads EKSTDKQGKEKTEN. The SIM motif motif lies at 138-143; that stretch reads LDKITE. Acidic residues predominate over residues 190–205; the sequence is SESDPDFDESKESDED. An interaction with DNA region spans residues 225 to 286; the sequence is GEKKERKSKP…PSAESKRPKW (62 aa). Lys251 is covalently cross-linked (Glycyl lysine isopeptide (Lys-Gly) (interchain with G-Cter in SUMO; alternate)). Residue Lys251 forms a Glycyl lysine isopeptide (Lys-Gly) (interchain with G-Cter in ubiquitin; alternate) linkage. Positions 286 to 289 match the WVPP motif motif; the sequence is WVPP. Residues 290 to 304 show a composition bias toward low complexity; that stretch reads AASGSRNSSSNALAG. The segment at 295–334 is interaction with RAD51; the sequence is RNSSSNALAGTPAKSPSQSLRLGLSRLAPVKRLHPSATSS. Ser309 carries the post-translational modification Phosphoserine.

In terms of assembly, monomer; elongated monodisperse monomer. Interacts (via C-terminal region) with RAD51; the interaction is direct. Interacts (via SIM motif) with WDR48/UAF1; WDR48/UAF1 and RAD51AP1 cooperate together to stimulate RAD51-mediated homologous recombination (HR). Interacts (via WVPP motif) with DMC1; the interaction is direct. Interacts with PALB2. Interacts with RAD52. Sumoylation with SUMO2/3 by NSMCE2/MMS21 promotes stabilization, possibly by preventing ubiquitination. Most abundantly expressed in testis. Also expressed in spleen, thymus and bone marrow. Not detected in heart, kidney or liver.

It localises to the chromosome. Its subcellular location is the nucleus. The protein resides in the telomere. Functionally, structure-specific DNA-binding protein involved in DNA repair by promoting RAD51-mediated homologous recombination. Acts by stimulating D-Loop formation by RAD51: specifically enhances joint molecule formation through its structure-specific DNA interaction and its interaction with RAD51. Binds single-stranded DNA (ssDNA), double-stranded DNA (dsDNA) and secondary DNA structures, such as D-loop structures: has a strong preference for branched-DNA structures that are obligatory intermediates during joint molecule formation. Cooperates with WDR48/UAF1 to stimulate RAD51-mediated homologous recombination: both WDR48/UAF1 and RAD51AP1 have coordinated role in DNA-binding during homologous recombination and DNA repair. WDR48/UAF1 and RAD51AP1 also have a coordinated role in DNA-binding to promote USP1-mediated deubiquitination of FANCD2. Also involved in meiosis by promoting DMC1-mediated homologous meiotic recombination. In Mus musculus (Mouse), this protein is RAD51-associated protein 1.